The following is a 292-amino-acid chain: Homoserine kinase (292 aa).

Residue 84 to 94 (PLSRGLGSSSA) participates in ATP binding.

This sequence belongs to the GHMP kinase family. Homoserine kinase subfamily.

Its subcellular location is the cytoplasm. It catalyses the reaction L-homoserine + ATP = O-phospho-L-homoserine + ADP + H(+). Its pathway is amino-acid biosynthesis; L-threonine biosynthesis; L-threonine from L-aspartate: step 4/5. Catalyzes the ATP-dependent phosphorylation of L-homoserine to L-homoserine phosphate. In Campylobacter jejuni subsp. jejuni serotype O:6 (strain 81116 / NCTC 11828), this protein is Homoserine kinase.